The sequence spans 1035 residues: Ephrin type-A receptor 6 (1035 aa).

The first 22 residues, 1–22 (MGGCEVREFLLQFGFFLPLLTA), serve as a signal peptide directing secretion. At 23–549 (WTGDCSHVSN…MAAEQGQILV (527 aa)) the chain is on the extracellular side. The 179-residue stretch at 33-211 (QVVLLDTSTV…FYKKCPFTVR (179 aa)) folds into the Eph LBD domain. 2 Fibronectin type-III domains span residues 330 to 440 (PPSA…TDQD) and 441 to 536 (APSL…TGDE). N-linked (GlcNAc...) asparagine glycans are attached at residues N342, N396, and N409. Residues 550 to 570 (IATAAVGGFTLLVILTLFFLI) form a helical membrane-spanning segment. Topologically, residues 571 to 1035 (TGRCQWYIKA…MHIQEKGFHV (465 aa)) are cytoplasmic. Residues Y605 and Y611 each carry the phosphotyrosine; by autocatalysis modification. The region spanning 630-943 (IRIERVIGAG…RNPSALHTLV (314 aa)) is the Protein kinase domain. Residues 636–644 (IGAGEFGEV) and K662 contribute to the ATP site. D797 acts as the Proton acceptor in catalysis. Residues Y830 and Y977 each carry the phosphotyrosine; by autocatalysis modification. Positions 960 to 1024 (PLFVTVGDWL…VSSIQTLRLH (65 aa)) constitute an SAM domain. The short motif at 1033 to 1035 (FHV) is the PDZ-binding element.

This sequence belongs to the protein kinase superfamily. Tyr protein kinase family. Ephrin receptor subfamily. Heterotetramer upon binding of the ligand. The heterotetramer is composed of an ephrin dimer and a receptor dimer. Oligomerization is probably required to induce biological responses. Interacts (via SAM domain) with ANKS1A (via SAM domain). Brain.

Its subcellular location is the membrane. The catalysed reaction is L-tyrosyl-[protein] + ATP = O-phospho-L-tyrosyl-[protein] + ADP + H(+). In terms of biological role, receptor tyrosine kinase which binds promiscuously GPI-anchored ephrin-A family ligands residing on adjacent cells, leading to contact-dependent bidirectional signaling into neighboring cells. The signaling pathway downstream of the receptor is referred to as forward signaling while the signaling pathway downstream of the ephrin ligand is referred to as reverse signaling. The sequence is that of Ephrin type-A receptor 6 (Epha6) from Rattus norvegicus (Rat).